An 86-amino-acid chain; its full sequence is MSTLDQTVHFDFRDNNPKNVHETLETVYKALEEKGYNPINQIVGYLISGDPAYIPRYNDARNLIRKHERDEIIEELVRNYLGKEQA.

The protein belongs to the UPF0297 family.

In Lacticaseibacillus casei (strain BL23) (Lactobacillus casei), this protein is UPF0297 protein LCABL_08470.